Consider the following 253-residue polypeptide: Major prion protein (253 aa).

A signal peptide spans 1–22 (MANLGCWMLVLFVATWSNLGLC). An interaction with ADGRG6 region spans residues 23–38 (KKRPKPGGWNTGGSRY). Positions 23-230 (KKRPKPGGWN…ESQAYYQRGS (208 aa)) are interaction with GRB2, ERI3 and SYN1. The segment at 25–108 (RPKPGGWNTG…WNKPSKPKTN (84 aa)) is disordered. A run of 5 repeats spans residues 51 to 59 (PQGGGGWGQ), 60 to 67 (PHGGGWGQ), 68 to 75 (PHGGGWGQ), 76 to 83 (PHGGGWGQ), and 84 to 91 (PHGGGWGQ). A 5 X 8 AA tandem repeats of P-H-G-G-G-W-G-Q region spans residues 51–91 (PQGGGGWGQPHGGGWGQPHGGGWGQPHGGGWGQPHGGGWGQ). Residues 52 to 95 (QGGGGWGQPHGGGWGQPHGGGWGQPHGGGWGQPHGGGWGQGGGT) are compositionally biased toward gly residues. The Cu(2+) site is built by H61, G62, G63, H69, G70, G71, H77, G78, G79, H85, G86, and G87. C179 and C214 form a disulfide bridge. N181 and N197 each carry an N-linked (GlcNAc...) asparagine glycan. The GPI-anchor amidated serine moiety is linked to residue S230. A propeptide spans 231 to 253 (SMVLFSSPPVILLISFLIFLIVG) (removed in mature form).

This sequence belongs to the prion family. As to quaternary structure, monomer and homodimer. Has a tendency to aggregate into amyloid fibrils containing a cross-beta spine, formed by a steric zipper of superposed beta-strands. Soluble oligomers may represent an intermediate stage on the path to fibril formation. Copper binding may promote oligomerization. Interacts with GRB2, APP, ERI3/PRNPIP and SYN1. Mislocalized cytosolically exposed PrP interacts with MGRN1; this interaction alters MGRN1 subcellular location and causes lysosomal enlargement. Interacts with APP. Interacts with KIAA1191. Interacts with ADGRG6.

The protein localises to the cell membrane. It localises to the golgi apparatus. Functionally, its primary physiological function is unclear. May play a role in neuronal development and synaptic plasticity. May be required for neuronal myelin sheath maintenance. May promote myelin homeostasis through acting as an agonist for ADGRG6 receptor. May play a role in iron uptake and iron homeostasis. Soluble oligomers are toxic to cultured neuroblastoma cells and induce apoptosis (in vitro). Association with GPC1 (via its heparan sulfate chains) targets PRNP to lipid rafts. Also provides Cu(2+) or Zn(2+) for the ascorbate-mediated GPC1 deaminase degradation of its heparan sulfate side chains. The protein is Major prion protein (PRNP) of Pongo pygmaeus (Bornean orangutan).